The following is a 286-amino-acid chain: 4-hydroxybenzoate octaprenyltransferase (286 aa).

9 helical membrane-spanning segments follow: residues Ile22–Val42, Phe45–Ile65, Leu90–Val110, Leu113–Phe133, Gln142–Gly162, Trp169–Val189, Leu212–Glu232, Val236–Ile256, and Phe265–Ala285.

Belongs to the UbiA prenyltransferase family. Requires Mg(2+) as cofactor.

It localises to the cell inner membrane. It catalyses the reaction all-trans-octaprenyl diphosphate + 4-hydroxybenzoate = 4-hydroxy-3-(all-trans-octaprenyl)benzoate + diphosphate. It functions in the pathway cofactor biosynthesis; ubiquinone biosynthesis. Its function is as follows. Catalyzes the prenylation of para-hydroxybenzoate (PHB) with an all-trans polyprenyl group. Mediates the second step in the final reaction sequence of ubiquinone-8 (UQ-8) biosynthesis, which is the condensation of the polyisoprenoid side chain with PHB, generating the first membrane-bound Q intermediate 3-octaprenyl-4-hydroxybenzoate. This is 4-hydroxybenzoate octaprenyltransferase from Tolumonas auensis (strain DSM 9187 / NBRC 110442 / TA 4).